Here is a 175-residue protein sequence, read N- to C-terminus: MLKVSARHAPVLRLPRRFYAQKTRVVIGPRLKNLDEIKEYLGKPTWSVEKYLQSSSNGETQPPSRETVEKLLKLSGLPNENVEMFQATLGKQLAFINKVQSLPVDESLDPSHARIIDRNSEALDYESLSCSVEQQETEKDSKMGEVGGSWDGTGLAAISENGFYVLREGLLKNRK.

The N-terminal 19 residues, 1-19 (MLKVSARHAPVLRLPRRFY), are a transit peptide targeting the mitochondrion.

It belongs to the GatF family. In terms of assembly, subunit of the heterotrimeric GatFAB amidotransferase (AdT) complex, composed of A, B and F subunits.

It localises to the mitochondrion inner membrane. It carries out the reaction L-glutamyl-tRNA(Gln) + L-glutamine + ATP + H2O = L-glutaminyl-tRNA(Gln) + L-glutamate + ADP + phosphate + H(+). In terms of biological role, allows the formation of correctly charged Gln-tRNA(Gln) through the transamidation of misacylated Glu-tRNA(Gln) in the mitochondria. The reaction takes place in the presence of glutamine and ATP through an activated gamma-phospho-Glu-tRNA(Gln). Required for proper protein synthesis within the mitochondrion. The protein is Glutamyl-tRNA(Gln) amidotransferase subunit F, mitochondrial of Lachancea thermotolerans (strain ATCC 56472 / CBS 6340 / NRRL Y-8284) (Yeast).